A 428-amino-acid chain; its full sequence is MSVIVDIRGREVLDSRGNPTVEAEVVLESGVVATALVPSGASTGETEAVELRDGDKNRFKGKGVLKAVDNINTKIADLLIGENALDQVRIDRLMLELDGTENKSNLGANAILAVSLAVARAAAMELDIPLYRYLGGTNAKVLPVPLMNVINGGAHADNNLDFQEFMIVPVFGGRFKEALRCGVEIFHTLKTVLKDKGYSTNVGDEGGFAPALNSTKEALDILMDAIKKAGYEPGEDVLLAIDAASTEFYDKERKVYRFEGEELTADDMIVLYEEIEGTYPIISIEDGLAEDDIEGWKKLTKALGDKIQLVGDDLFTTNPKLIKKGIEEGIANSVLVKLNQIGSLTETLDAIELAKVASYTNVISHRSGETEDTFIADLAVATNAGQIKTGSASRTDRIAKYNQLLRIEEELGEDAVFKGKEAYSKFIR.

Gln-163 contributes to the (2R)-2-phosphoglycerate binding site. Residue Glu-205 is the Proton donor of the active site. Residues Asp-242, Glu-285, and Asp-312 each coordinate Mg(2+). (2R)-2-phosphoglycerate contacts are provided by Lys-337, Arg-366, Ser-367, and Lys-388. Lys-337 functions as the Proton acceptor in the catalytic mechanism.

Belongs to the enolase family. Requires Mg(2+) as cofactor.

It localises to the cytoplasm. Its subcellular location is the secreted. The protein resides in the cell surface. It carries out the reaction (2R)-2-phosphoglycerate = phosphoenolpyruvate + H2O. The protein operates within carbohydrate degradation; glycolysis; pyruvate from D-glyceraldehyde 3-phosphate: step 4/5. In terms of biological role, catalyzes the reversible conversion of 2-phosphoglycerate (2-PG) into phosphoenolpyruvate (PEP). It is essential for the degradation of carbohydrates via glycolysis. This chain is Enolase, found in Persephonella marina (strain DSM 14350 / EX-H1).